We begin with the raw amino-acid sequence, 263 residues long: Thiazole synthase (263 aa).

Residue Lys100 is the Schiff-base intermediate with DXP of the active site. Residues Gly161, 188 to 189 (AG), and 210 to 211 (NS) contribute to the 1-deoxy-D-xylulose 5-phosphate site.

It belongs to the ThiG family. As to quaternary structure, homotetramer. Forms heterodimers with either ThiH or ThiS.

It is found in the cytoplasm. The catalysed reaction is [ThiS sulfur-carrier protein]-C-terminal-Gly-aminoethanethioate + 2-iminoacetate + 1-deoxy-D-xylulose 5-phosphate = [ThiS sulfur-carrier protein]-C-terminal Gly-Gly + 2-[(2R,5Z)-2-carboxy-4-methylthiazol-5(2H)-ylidene]ethyl phosphate + 2 H2O + H(+). Its pathway is cofactor biosynthesis; thiamine diphosphate biosynthesis. Catalyzes the rearrangement of 1-deoxy-D-xylulose 5-phosphate (DXP) to produce the thiazole phosphate moiety of thiamine. Sulfur is provided by the thiocarboxylate moiety of the carrier protein ThiS. In vitro, sulfur can be provided by H(2)S. This is Thiazole synthase from Pseudoalteromonas translucida (strain TAC 125).